We begin with the raw amino-acid sequence, 139 residues long: D-ribose pyranase (139 aa).

Histidine 20 (proton donor) is an active-site residue. Residues aspartate 28, histidine 106, and 128-130 (YAN) contribute to the substrate site.

It belongs to the RbsD / FucU family. RbsD subfamily. Homodecamer.

Its subcellular location is the cytoplasm. It catalyses the reaction beta-D-ribopyranose = beta-D-ribofuranose. The protein operates within carbohydrate metabolism; D-ribose degradation; D-ribose 5-phosphate from beta-D-ribopyranose: step 1/2. Functionally, catalyzes the interconversion of beta-pyran and beta-furan forms of D-ribose. The protein is D-ribose pyranase of Actinobacillus pleuropneumoniae serotype 7 (strain AP76).